The chain runs to 440 residues: Xylose isomerase (440 aa).

Catalysis depends on residues histidine 100 and aspartate 103. The Mg(2+) site is built by glutamate 231, glutamate 267, histidine 270, aspartate 295, aspartate 306, aspartate 308, and aspartate 338.

The protein belongs to the xylose isomerase family. In terms of assembly, homotetramer. It depends on Mg(2+) as a cofactor.

The protein resides in the cytoplasm. It catalyses the reaction alpha-D-xylose = alpha-D-xylulofuranose. The protein is Xylose isomerase of Burkholderia thailandensis (strain ATCC 700388 / DSM 13276 / CCUG 48851 / CIP 106301 / E264).